A 147-amino-acid polypeptide reads, in one-letter code: uncharacterized protein (147 aa).

A Response regulatory domain is found at 1 to 59 (MGAELVKWVKSHKIDAHIITFVAKMPYIDSIKLLEAGAKGCVWKTSHPAKLNRAIDSIS). An HTH luxR-type domain is found at 78-143 (RYSSDNQLTN…ELIKTALRMG (66 aa)). Residues 102–121 (NKEIANFLQLSRKTVETHRL) constitute a DNA-binding region (H-T-H motif).

In terms of processing, overexpressed protein is phosphorylated in vitro by non-cognate histidine kinases BarA and UhpB.

This is an uncharacterized protein from Escherichia coli (strain K12).